A 206-amino-acid chain; its full sequence is Smr domain-containing protein C11H11.03c (206 aa).

Positions 75-150 (IDLHGLYIDE…NEGRIYVYLP (76 aa)) constitute a Smr domain.

It is found in the cytoplasm. The protein localises to the nucleus. This chain is Smr domain-containing protein C11H11.03c, found in Schizosaccharomyces pombe (strain 972 / ATCC 24843) (Fission yeast).